Here is a 2009-residue protein sequence, read N- to C-terminus: Sodium channel protein type 1 subunit alpha (2009 aa).

Over 1–128 (MEQTVLVPPG…KIAIKILVHS (128 aa)) the chain is Cytoplasmic. A compositionally biased stretch (basic and acidic residues) spans 28 to 48 (RIAEEKAKNPKPDKKDDDENG). The interval 28–60 (RIAEEKAKNPKPDKKDDDENGPKPNSDLEAGKN) is disordered. One copy of the I repeat lies at 110–454 (ILTPFNPLRK…QQMLEQLKKQ (345 aa)). The chain crosses the membrane as a helical span at residues 129-146 (LFSMLIMCTILTNCVFMT). Residues 147 to 152 (MSNPPD) lie on the Extracellular side of the membrane. A helical membrane pass occupies residues 153–177 (WTKNVEYTFTGIYTFESLIKIIARG). Topologically, residues 178 to 188 (FCLEDFTFLRD) are cytoplasmic. Residues 189 to 205 (PWNWLDFTVITFAYVTE) form a helical membrane-spanning segment. At 206-213 (FVDLGNVS) the chain is on the extracellular side. Residue asparagine 211 is glycosylated (N-linked (GlcNAc...) asparagine). Residues 214-235 (ALRTFRVLRALKTISVIPGLKT) form a helical membrane-spanning segment. Over 236-245 (IVGALIQSVK) the chain is Cytoplasmic. Residues 246–269 (KLSDVMILTVFCLSVFALIGLQLF) form a helical membrane-spanning segment. Topologically, residues 270–369 (MGNLRNKCVQ…YGYTSFDTFS (100 aa)) are extracellular. Cystine bridges form between cysteine 277-cysteine 345 and cysteine 336-cysteine 351. N-linked (GlcNAc...) asparagine glycosylation is found at asparagine 284, asparagine 295, asparagine 301, asparagine 306, and asparagine 338. An intramembrane region (pore-forming) is located at residues 370 to 384 (WAFLSLFRLMTQDFW). At 385–397 (ENLYQLTLRAAGK) the chain is on the extracellular side. Residues 398–423 (TYMIFFVLVIFLGSFYLINLILAVVA) form a helical membrane-spanning segment. Residues 424–768 (MAYEEQNQAT…HIVNLVVMDP (345 aa)) lie on the Cytoplasmic side of the membrane. Residues 458–528 (AQQAAAATAS…EFHKSESEDS (71 aa)) form a disordered region. The residue at position 470 (serine 470) is a Phosphoserine. Low complexity predominate over residues 479–492 (LSDSSSEASKLSSK). Residues 495 to 506 (KERRNRRKKRKQ) are compositionally biased toward basic residues. Positions 507-528 (KEQSGGEEKDDDEFHKSESEDS) are enriched in basic and acidic residues. Residues serine 523, serine 525, serine 550, serine 551, serine 607, and serine 730 each carry the phosphoserine modification. The disordered stretch occupies residues 584 to 628 (VGSENDFADDEHSTFEDNESRRDSLFVPRRHGERRNSNLSQTSRS). The segment covering 593–607 (DEHSTFEDNESRRDS) has biased composition (basic and acidic residues). The II repeat unit spans residues 750–1022 (CSPYWLKVKH…QIAVDRMHKG (273 aa)). A helical membrane pass occupies residues 769-787 (FVDLAITICIVLNTLFMAM). Residues 788 to 797 (EHYPMTEHFN) lie on the Extracellular side of the membrane. The helical transmembrane segment at 798–820 (HVLTVGNLVFTGIFTAEMFLKII) threads the bilayer. Residues 821-830 (AMDPYYYFQE) lie on the Cytoplasmic side of the membrane. The helical transmembrane segment at 831-849 (GWNIFDGFIVTLSLVELGL) threads the bilayer. The Extracellular segment spans residues 850 to 854 (ANVEG). A helical membrane pass occupies residues 855 to 874 (LSVLRSFRLLRVFKLAKSWP). Over 875-891 (TLNMLIKIIGNSVGALG) the chain is Cytoplasmic. A helical membrane pass occupies residues 892-912 (NLTLVLAIIVFIFAVVGMQLF). The Extracellular segment spans residues 913-938 (GKSYKDCVCKIATDCKLPRWHMNDFF). Cysteine 921 and cysteine 927 are oxidised to a cystine. The pore-forming intramembrane region spans 939–952 (HSFLIVFRVLCGEW). The Extracellular segment spans residues 953–965 (IETMWDCMEVAGQ). A disulfide bridge links cysteine 959 with cysteine 968. A helical transmembrane segment spans residues 966–992 (AMCLTVFMMVMVIRNLVVLNLFLALLL). Topologically, residues 993–1218 (SSFSADNLAA…RTCFRIVEHN (226 aa)) are cytoplasmic. The interval 1129-1163 (TEDFSSESDLEESKEKLNESSSSSEGSTVDIGAPA) is disordered. The III repeat unit spans residues 1200-1514 (RGKQWWNLRR…KKYYNAMKKL (315 aa)). Residues 1219 to 1237 (WFETFIVFMILLSSGALAF) form a helical membrane-spanning segment. Residues 1238–1250 (EDIYIDQRKTIKT) lie on the Extracellular side of the membrane. A helical transmembrane segment spans residues 1251 to 1276 (MLEYADKVFTYIFILEMLLKWVAYGY). Over 1277 to 1278 (QT) the chain is Cytoplasmic. A helical membrane pass occupies residues 1279–1304 (YFTNAWCWLDFLIVDVSLVSLTANAL). Over 1305–1313 (GYSELGAIK) the chain is Extracellular. Residues 1314-1332 (SLRTLRALRPLRALSRFEG) form a helical membrane-spanning segment. Residues 1333–1345 (MRVVVNALLGAIP) lie on the Cytoplasmic side of the membrane. A helical transmembrane segment spans residues 1346 to 1369 (SIMNVLLVCLIFWLIFSIMGVNLF). Over 1370-1415 (AGKFYHCVNTTTGDTFEITEVNNHSDCLKLIERNETARWKNVKVNF) the chain is Extracellular. The cysteines at positions 1376 and 1396 are disulfide-linked. 3 N-linked (GlcNAc...) asparagine glycosylation sites follow: asparagine 1378, asparagine 1392, and asparagine 1403. The segment at residues 1416–1433 (DNVGFGYLSLLQVATFKG) is an intramembrane region (pore-forming). The Extracellular portion of the chain corresponds to 1434–1457 (WMDIMYAAVDSRNVELQPKYEESL). A helical membrane pass occupies residues 1458 to 1483 (YMYLYFVIFIIFGSFFTLNLFIGVII). Residues 1484–1541 (DNFNQQKKKFGGQDIFMTEEQKKYYNAMKKLGSKKPQKPIPRPGNKFQGMVFDFVTRQ) lie on the Cytoplasmic side of the membrane. The residue at position 1516 (serine 1516) is a Phosphoserine; by PKC. The stretch at 1523–1821 (IPRPGNKFQG…WEKFDPDATQ (299 aa)) is one IV repeat. Residues 1542-1560 (VFDISIMILICLNMVTMMV) traverse the membrane as a helical segment. Residues 1561–1571 (ETDDQSDYVTS) lie on the Extracellular side of the membrane. Residues 1561–1571 (ETDDQSDYVTS) are S1-S2 loop of repeat IV. A helical membrane pass occupies residues 1572–1593 (ILSRINLVFIVLFTGECVLKLI). At 1594–1601 (SLRHYYFT) the chain is on the cytoplasmic side. The chain crosses the membrane as a helical span at residues 1602 to 1623 (IGWNIFDFVVVILSIVGMFLAE). Residues 1619–1636 (MFLAELIEKYFVSPTLFR) are S3b-S4 loop of repeat IV. Over 1624 to 1636 (LIEKYFVSPTLFR) the chain is Extracellular. The chain crosses the membrane as a helical span at residues 1637–1655 (VIRLARIGRILRLIKGAKG). Residues 1656-1665 (IRTLLFALMM) lie on the Cytoplasmic side of the membrane. Residues 1666-1688 (SLPALFNIGLLLFLVMFIYAIFG) traverse the membrane as a helical segment. Residues 1689 to 1711 (MSNFAYVKREVGIDDMFNFETFG) are Extracellular-facing. An intramembrane region (pore-forming) is located at residues 1712 to 1726 (NSMICLFQITTSAGW). Over 1727 to 1759 (DGLLAPILNSKPPDCDPNKVNPGSSVKGDCGNP) the chain is Extracellular. Cysteine 1741 and cysteine 1756 form a disulfide bridge. A helical membrane pass occupies residues 1760–1788 (SVGIFFFVSYIIISFLVVVNMYIAVILEN). The Cytoplasmic portion of the chain corresponds to 1789 to 2009 (FSVATEESAE…EGKDEKAKGK (221 aa)). One can recognise an IQ domain in the interval 1915 to 1944 (EEVSAVIIQRAYRRHLLKRTVKQASFTYNK). The disordered stretch occupies residues 1986-2009 (YDRVTKPIVEKHEQEGKDEKAKGK). Basic and acidic residues predominate over residues 1988-2009 (RVTKPIVEKHEQEGKDEKAKGK).

Belongs to the sodium channel (TC 1.A.1.10) family. Nav1.1/SCN1A subfamily. As to quaternary structure, the Nav1.1 voltage-gated sodium channel consists of an ion-conducting alpha subunit SCN1A which is functional on its own regulated by one or more beta-1 (SCN1B), beta-2 (SCN2B), beta-3 (SCN3B) and beta-4 (SCN4B) subunits. SCN1B and SCN3B are non-covalently associated with SCN1A. SCN2B and SCN4B are disulfide-linked to SCN1A. SCN1B regulates both the expression at the plasma membrane and the voltage dependence of Nav1.1 inactivation. SCN3B and SCN4B reduce Nav1.1 conductance. Probably interacts with TMEM233; modulates the gating properties of NaV1.1. Interacts with FGF13; regulates the steady-state inactivation of Nav.1.1. In terms of processing, phosphorylation at Ser-1516 by PKC in a highly conserved cytoplasmic loop slows inactivation of the sodium channel and reduces peak sodium currents.

Its subcellular location is the cell membrane. The catalysed reaction is Na(+)(in) = Na(+)(out). With respect to regulation, activated by the spider toxins Hm1a and Hm1b (H.maculata, AC P60992 and AC P0DOC5) eliciting acute pain and mechanical allodynia. Inhibited by the conotoxin GVIIJ. Its function is as follows. Pore-forming subunit of Nav1.1, a voltage-gated sodium (Nav) channel that directly mediates the depolarizing phase of action potentials in excitable membranes. Navs, also called VGSCs (voltage-gated sodium channels) or VDSCs (voltage-dependent sodium channels), operate by switching between closed and open conformations depending on the voltage difference across the membrane. In the open conformation they allow Na(+) ions to selectively pass through the pore, along their electrochemical gradient. The influx of Na(+) ions provokes membrane depolarization, initiating the propagation of electrical signals throughout cells and tissues. By regulating the excitability of neurons, ensures that they respond appropriately to synaptic inputs, maintaining the balance between excitation and inhibition in brain neural circuits. Nav1.1 plays a role in controlling the excitability and action potential propagation from somatosensory neurons, thereby contributing to the sensory perception of mechanically-induced pain. The sequence is that of Sodium channel protein type 1 subunit alpha from Rattus norvegicus (Rat).